The sequence spans 170 residues: Adenine phosphoribosyltransferase (170 aa).

Belongs to the purine/pyrimidine phosphoribosyltransferase family. Homodimer.

The protein localises to the cytoplasm. It carries out the reaction AMP + diphosphate = 5-phospho-alpha-D-ribose 1-diphosphate + adenine. The protein operates within purine metabolism; AMP biosynthesis via salvage pathway; AMP from adenine: step 1/1. Catalyzes a salvage reaction resulting in the formation of AMP, that is energically less costly than de novo synthesis. The sequence is that of Adenine phosphoribosyltransferase from Brevibacillus brevis (strain 47 / JCM 6285 / NBRC 100599).